Here is a 314-residue protein sequence, read N- to C-terminus: Methionyl-tRNA formyltransferase (314 aa).

Residue 110 to 113 (SLLP) participates in (6S)-5,6,7,8-tetrahydrofolate binding.

Belongs to the Fmt family.

The enzyme catalyses L-methionyl-tRNA(fMet) + (6R)-10-formyltetrahydrofolate = N-formyl-L-methionyl-tRNA(fMet) + (6S)-5,6,7,8-tetrahydrofolate + H(+). Its function is as follows. Attaches a formyl group to the free amino group of methionyl-tRNA(fMet). The formyl group appears to play a dual role in the initiator identity of N-formylmethionyl-tRNA by promoting its recognition by IF2 and preventing the misappropriation of this tRNA by the elongation apparatus. The chain is Methionyl-tRNA formyltransferase from Bacillus cereus (strain G9842).